The following is a 110-amino-acid chain: Small ribosomal subunit protein mS33 (110 aa).

Basic residues predominate over residues 84–95 (KRRGKGAPKKMK). The tract at residues 84–110 (KRRGKGAPKKMKKDAAATAKGKGKKKK) is disordered.

This sequence belongs to the mitochondrion-specific ribosomal protein mS33 family. As to quaternary structure, component of the mitochondrial small ribosomal subunit (mt-SSU). Mature yeast 74S mitochondrial ribosomes consist of a small (37S) and a large (54S) subunit. The 37S small subunit contains a 15S ribosomal RNA (15S mt-rRNA) and 34 different proteins. The 54S large subunit contains a 21S rRNA (21S mt-rRNA) and 46 different proteins.

The protein localises to the mitochondrion. Functionally, component of the mitochondrial ribosome (mitoribosome), a dedicated translation machinery responsible for the synthesis of mitochondrial genome-encoded proteins, including at least some of the essential transmembrane subunits of the mitochondrial respiratory chain. The mitoribosomes are attached to the mitochondrial inner membrane and translation products are cotranslationally integrated into the membrane. In Saccharomyces cerevisiae (strain ATCC 204508 / S288c) (Baker's yeast), this protein is Small ribosomal subunit protein mS33 (RSM27).